Here is a 175-residue protein sequence, read N- to C-terminus: NADH-quinone oxidoreductase subunit I (175 aa).

2 4Fe-4S ferredoxin-type domains span residues lysine 69–alanine 98 and lysine 115–proline 144. Positions 78, 81, 84, 88, 124, 127, 130, and 134 each coordinate [4Fe-4S] cluster.

This sequence belongs to the complex I 23 kDa subunit family. As to quaternary structure, NDH-1 is composed of 14 different subunits. Subunits NuoA, H, J, K, L, M, N constitute the membrane sector of the complex. It depends on [4Fe-4S] cluster as a cofactor.

Its subcellular location is the cell inner membrane. It carries out the reaction a quinone + NADH + 5 H(+)(in) = a quinol + NAD(+) + 4 H(+)(out). NDH-1 shuttles electrons from NADH, via FMN and iron-sulfur (Fe-S) centers, to quinones in the respiratory chain. The immediate electron acceptor for the enzyme in this species is believed to be ubiquinone. Couples the redox reaction to proton translocation (for every two electrons transferred, four hydrogen ions are translocated across the cytoplasmic membrane), and thus conserves the redox energy in a proton gradient. The protein is NADH-quinone oxidoreductase subunit I of Leptospira interrogans serogroup Icterohaemorrhagiae serovar Lai (strain 56601).